Reading from the N-terminus, the 359-residue chain is 4-hydroxy-3-methylbut-2-en-1-yl diphosphate synthase (flavodoxin) (359 aa).

Residues Cys264, Cys267, Cys299, and Glu306 each contribute to the [4Fe-4S] cluster site.

This sequence belongs to the IspG family. It depends on [4Fe-4S] cluster as a cofactor.

The enzyme catalyses (2E)-4-hydroxy-3-methylbut-2-enyl diphosphate + oxidized [flavodoxin] + H2O + 2 H(+) = 2-C-methyl-D-erythritol 2,4-cyclic diphosphate + reduced [flavodoxin]. It functions in the pathway isoprenoid biosynthesis; isopentenyl diphosphate biosynthesis via DXP pathway; isopentenyl diphosphate from 1-deoxy-D-xylulose 5-phosphate: step 5/6. In terms of biological role, converts 2C-methyl-D-erythritol 2,4-cyclodiphosphate (ME-2,4cPP) into 1-hydroxy-2-methyl-2-(E)-butenyl 4-diphosphate. The protein is 4-hydroxy-3-methylbut-2-en-1-yl diphosphate synthase (flavodoxin) of Helicobacter pylori (strain ATCC 700392 / 26695) (Campylobacter pylori).